The primary structure comprises 211 residues: uncharacterized protein (211 aa).

Positions 1-20 are cleaved as a signal peptide; it reads MSRVQISTVLAIDTATPAVT.

This sequence to M.leprae ML0378.

This is an uncharacterized protein from Mycobacterium tuberculosis (strain CDC 1551 / Oshkosh).